Here is a 1586-residue protein sequence, read N- to C-terminus: METSASATASEKQEAKSGILEAAGFPDPGKKASPLVVAAAAAAAVAAQGVPQHLLPPFHAPLPIDMRHQEGRYHYEPHSVHGVHGPPALSGSPVISDISLIRLSPHPAGPGESPFNAPHPYVNPHMEHYLRSVHSSPTLSMISAARGLSPADVAQEHLKERGLFGLPAPGTTPSDYYHQMTLVAGHPAPYGDLLMQSGGAASAPHLHDYLNPVDVSRFSSPRVTPRLSRKRALSISPLSDASLDLQRMIRTSPNSLVAYINNSRSSSAASGSYGHLSAGALSPAFTFPHPINPVAYQQILSQQRGLGSAFGHTPPLIQPSPTFLAQQPMALTSINATPTQLSSSSNCLSDTNQNKQSSESAVSSTVNPVAIHKRSKVKTEPEGLRPASPLALTQGQVSGHGSCGCALPLSQEQLADLKEDLDRDDCKQEAEVVIYETNCHWEDCTKEYDTQEQLVHHINNEHIHGEKKEFVCRWQACTREQKPFKAQYMLVVHMRRHTGEKPHKCTFEGCSKAYSRLENLKTHLRSHTGEKPYVCEHEGCNKAFSNASDRAKHQNRTHSNEKPYICKIPGCTKRYTDPSSLRKHVKTVHGPDAHVTKKQRNDVHLRTPLLKENGDSEAGTEPGGPESTEASSTSQAVEDCLHVRAIKTESSGLCQSSPGAQSSCSSEPSPLGSAPNNDSGVEMPGTGPGSLGDLTALDDTPPGADTSALAAPSAGGLQLRKHMTTMHRFEQLKKEKLKSLKDSCSWAGPTPHTRNTKLPPLPGSGSILENFSGSGGGGPAGLLPNPRLSELSASEVTMLSQLQERRDSSTSTVSSAYTVSRRSSGISPYFSSRRSSEASPLGAGRPHNASSADSYDPISTDASRRSSEASQCSGGSGLLNLTPAQQYSLRAKYAAATGGPPPTPLPGLERMSLRTRLALLDAPERTLPAGCPRPLGPRRGSDGPTYGHGHAGAAPAFPHEAPGGGARRASDPVRRPDALSLPRVQRFHSTHNVNPGPLPPCADRRGLRLQSHPSTDGGLARGAYSPRPPSISENVAMEAVAAGVDGAGPEADLGLPEDDLVLPDDVVQYIKAHASGALDEGTGQVYPTESTGFSDNPRLPSPGLHGQRRMVAADSNVGPSAPMLGGCQLGFGAPSSLNKNNMPVQWNEVSSGTVDALASQVKPPPFPQGNLAVVQQKPAFGQYPGYSPQGLQASPGGLDSTQPHLQPRSGAPSQGIPRVNYMQQLRQPVAGSQCPGMTTTMSPHACYGQVHPQLSPSTISGALNQFPQSCSNMPAKPGHLGHPQQTEVAPDPTTMGNRHRELGVPDSALAGVPPPHPVQSYPQQSHHLAASMSQEGYHQVPSLLPARQPGFMEPQTGPMGVATAGFGLVQPRPPLEPSPTGRHRGVRAVQQQLAYARATGHAMAAMPSSQETAEAVPKGAMGNMGSVPPQPPPQDAGGAPDHSMLYYYGQIHMYEQDGGLENLGSCQVMRSQPPQPQACQDSIQPQPLPSPGVNQVSSTVDSQLLEAPQIDFDAIMDDGDHSSLFSGALSPSLLHSLSQNSSRLTTPRNSLTLPSIPAGISNMAVGDMSSMLTSLAEESKFLNMMT.

Residues 1-10 (METSASATAS) show a composition bias toward polar residues. Positions 1-22 (METSASATASEKQEAKSGILEA) are disordered. Valine 50 is covalently cross-linked (Glycyl lysine isopeptide (Lys-Gly) (interchain with G-Cter in SUMO2)). A phosphoserine mark is found at serine 149, serine 234, serine 236, and serine 242. Residues 342–367 (SSSSNCLSDTNQNKQSSESAVSSTVN) show a composition bias toward polar residues. Positions 342 to 389 (SSSSNCLSDTNQNKQSSESAVSSTVNPVAIHKRSKVKTEPEGLRPASP) are disordered. Residue serine 388 is modified to Phosphoserine; by DYRK2. The C2H2-type 1 zinc finger occupies 437 to 464 (TNCHWEDCTKEYDTQEQLVHHINNEHIH). Residues 475 to 497 (QACTREQKPFKAQYMLVVHMRRH) form a C2H2-type 2; degenerate zinc finger. 3 consecutive C2H2-type zinc fingers follow at residues 503 to 527 (HKCT…LRSH), 533 to 558 (YVCE…NRTH), and 564 to 589 (YICK…KTVH). Disordered stretches follow at residues 577–636 (DPSS…TSQA) and 650–716 (SSGL…SAGG). Residues 589 to 605 (HGPDAHVTKKQRNDVHL) show a composition bias toward basic and acidic residues. Residues 654–674 (CQSSPGAQSSCSSEPSPLGSA) show a composition bias toward low complexity. Residue threonine 725 is modified to Phosphothreonine. 5 disordered regions span residues 742-879 (DSCS…SGLL), 925-1030 (RTLP…RPPS), 1182-1215 (QYPG…PSQG), 1421-1441 (MGNM…GAPD), and 1469-1498 (MRSQ…QVSS). Lysine 757 bears the N6-acetyllysine; by EP300 mark. Residues 791–802 (LSASEVTMLSQL) show a composition bias toward polar residues. Composition is skewed to low complexity over residues 809 to 824 (STST…RRSS) and 947 to 961 (GHGH…PHEA). Basic and acidic residues predominate over residues 968-977 (RASDPVRRPD). A Phosphoserine; by DYRK2 modification is found at serine 1011. The segment covering 1469–1485 (MRSQPPQPQACQDSIQP) has biased composition (polar residues).

Belongs to the GLI C2H2-type zinc-finger protein family. Interaction with ZIC1 and ZIC2. Interacts with STK36. Interacts with SUFU; this inhibits transcriptional activation mediated by GLI2. Interacts (via C-terminal internal region) with FOXC1 (via N-terminus); this interaction is direct and increases GLI2 DNA-binding and transcriptional activity through a smoothened (SMO)-independent Hedgehog (Hh) signaling pathway. Post-translationally, phosphorylated in vitro by ULK3. Phosphorylated by DYRK2; this inhibits GLI2 transcription factor activity and promotes proteasomal degradation of GLI2. Acetylation at Lys-757 inhibits Hh target gene expression, probably by impeding entry into chromatin thus preventing promoter occupancy. As to expression, expressed in breast cancers (at protein level). Isoform 1 and isoform 4 are expressed in HTLV-1-infected T-cell lines (at protein level). Isoform 1 and isoform 2 are strongly expressed in HTLV-1-infected T-cell lines. Isoform 3 and isoform 4 are weakly expressed in HTLV-1-infected T-cell lines.

The protein localises to the nucleus. It is found in the cytoplasm. The protein resides in the cell projection. Its subcellular location is the cilium. In terms of biological role, functions as a transcription regulator in the hedgehog (Hh) pathway. Functions as a transcriptional activator. May also function as transcriptional repressor. Requires STK36 for full transcriptional activator activity. Required for normal embryonic development. Functionally, involved in the smoothened (SHH) signaling pathway. Acts as a transcriptional activator in T-cell leukemia virus type 1 (HTLV-1)-infected cells in a Tax-dependent manner. Binds to the DNA sequence 5'-GAACCACCCA-3' which is part of the Tax-responsive element (TRE-2S) regulatory element that augments the Tax-dependent enhancer of HTLV-1. Its function is as follows. (Microbial infection) Acts as a transcriptional activators in T-cell leukemia virus type 1 (HTLV-1)-infected cells in a Tax-dependent manner. Binds to the DNA sequence 5'-GAACCACCCA-3' which is part of the Tax-responsive element (TRE-2S) regulatory element that augments the Tax-dependent enhancer of HTLV-1. In terms of biological role, acts as a transcriptional repressor. In Homo sapiens (Human), this protein is Zinc finger protein GLI2.